The following is a 155-amino-acid chain: Ribosomal RNA large subunit methyltransferase H (155 aa).

S-adenosyl-L-methionine is bound by residues Leu72, Gly103, and 122–127; that span reads LGRMVW.

Belongs to the RNA methyltransferase RlmH family. In terms of assembly, homodimer.

The protein resides in the cytoplasm. It carries out the reaction pseudouridine(1915) in 23S rRNA + S-adenosyl-L-methionine = N(3)-methylpseudouridine(1915) in 23S rRNA + S-adenosyl-L-homocysteine + H(+). In terms of biological role, specifically methylates the pseudouridine at position 1915 (m3Psi1915) in 23S rRNA. The polypeptide is Ribosomal RNA large subunit methyltransferase H (Cereibacter sphaeroides (strain ATCC 17029 / ATH 2.4.9) (Rhodobacter sphaeroides)).